Here is a 240-residue protein sequence, read N- to C-terminus: Ubiquinone biosynthesis O-methyltransferase (240 aa).

Arginine 44, glycine 64, aspartate 85, and methionine 129 together coordinate S-adenosyl-L-methionine.

Belongs to the methyltransferase superfamily. UbiG/COQ3 family.

It catalyses the reaction a 3-demethylubiquinol + S-adenosyl-L-methionine = a ubiquinol + S-adenosyl-L-homocysteine + H(+). The catalysed reaction is a 3-(all-trans-polyprenyl)benzene-1,2-diol + S-adenosyl-L-methionine = a 2-methoxy-6-(all-trans-polyprenyl)phenol + S-adenosyl-L-homocysteine + H(+). It functions in the pathway cofactor biosynthesis; ubiquinone biosynthesis. In terms of biological role, O-methyltransferase that catalyzes the 2 O-methylation steps in the ubiquinone biosynthetic pathway. The protein is Ubiquinone biosynthesis O-methyltransferase of Escherichia fergusonii (strain ATCC 35469 / DSM 13698 / CCUG 18766 / IAM 14443 / JCM 21226 / LMG 7866 / NBRC 102419 / NCTC 12128 / CDC 0568-73).